Here is a 193-residue protein sequence, read N- to C-terminus: Orotate phosphoribosyltransferase (193 aa).

5-phospho-alpha-D-ribose 1-diphosphate contacts are provided by residues Arg-85, Lys-89, and 111-119 (DDVLTTGKS). 2 residues coordinate orotate: Thr-115 and Arg-143.

Belongs to the purine/pyrimidine phosphoribosyltransferase family. PyrE subfamily. As to quaternary structure, homodimer. The cofactor is Mg(2+).

It carries out the reaction orotidine 5'-phosphate + diphosphate = orotate + 5-phospho-alpha-D-ribose 1-diphosphate. It participates in pyrimidine metabolism; UMP biosynthesis via de novo pathway; UMP from orotate: step 1/2. Catalyzes the transfer of a ribosyl phosphate group from 5-phosphoribose 1-diphosphate to orotate, leading to the formation of orotidine monophosphate (OMP). The protein is Orotate phosphoribosyltransferase of Pyrobaculum aerophilum (strain ATCC 51768 / DSM 7523 / JCM 9630 / CIP 104966 / NBRC 100827 / IM2).